The chain runs to 284 residues: tRNA (guanine-N(7)-)-methyltransferase (284 aa).

Residues Gly102, 125–126 (EI), 160–161 (NT), and Cys180 each bind S-adenosyl-L-methionine. The active site involves Asp183. An S-adenosyl-L-methionine-binding site is contributed by 258–260 (TEE).

It belongs to the class I-like SAM-binding methyltransferase superfamily. TrmB family. As to quaternary structure, forms a complex with TRM82.

The protein localises to the nucleus. The catalysed reaction is guanosine(46) in tRNA + S-adenosyl-L-methionine = N(7)-methylguanosine(46) in tRNA + S-adenosyl-L-homocysteine. Its pathway is tRNA modification; N(7)-methylguanine-tRNA biosynthesis. Functionally, catalyzes the formation of N(7)-methylguanine at position 46 (m7G46) in tRNA. In Podospora anserina (strain S / ATCC MYA-4624 / DSM 980 / FGSC 10383) (Pleurage anserina), this protein is tRNA (guanine-N(7)-)-methyltransferase.